Consider the following 107-residue polypeptide: uncharacterized protein (107 aa).

A signal peptide spans 1–34; the sequence is MRLQWPKFITFLSTGSCCLLFLLLPCSFFPLPTA.

This is an uncharacterized protein from Saccharomyces cerevisiae (strain ATCC 204508 / S288c) (Baker's yeast).